A 468-amino-acid polypeptide reads, in one-letter code: UDP-N-acetylmuramate--L-alanine ligase (468 aa).

112-118 (GTHGKTT) contributes to the ATP binding site.

The protein belongs to the MurCDEF family.

Its subcellular location is the cytoplasm. The catalysed reaction is UDP-N-acetyl-alpha-D-muramate + L-alanine + ATP = UDP-N-acetyl-alpha-D-muramoyl-L-alanine + ADP + phosphate + H(+). Its pathway is cell wall biogenesis; peptidoglycan biosynthesis. Functionally, cell wall formation. The sequence is that of UDP-N-acetylmuramate--L-alanine ligase from Bordetella petrii (strain ATCC BAA-461 / DSM 12804 / CCUG 43448).